The sequence spans 501 residues: Amidophosphoribosyltransferase (501 aa).

Catalysis depends on C2, which acts as the Nucleophile. A Glutamine amidotransferase type-2 domain is found at 2-234 (CGIVGIVGKS…PGEAVYITEE (233 aa)). 3 residues coordinate Mg(2+): T303, D365, and D366.

It in the C-terminal section; belongs to the purine/pyrimidine phosphoribosyltransferase family. Mg(2+) is required as a cofactor.

It catalyses the reaction 5-phospho-beta-D-ribosylamine + L-glutamate + diphosphate = 5-phospho-alpha-D-ribose 1-diphosphate + L-glutamine + H2O. It participates in purine metabolism; IMP biosynthesis via de novo pathway; N(1)-(5-phospho-D-ribosyl)glycinamide from 5-phospho-alpha-D-ribose 1-diphosphate: step 1/2. Its function is as follows. Catalyzes the formation of phosphoribosylamine from phosphoribosylpyrophosphate (PRPP) and glutamine. In Pseudomonas aeruginosa (strain ATCC 15692 / DSM 22644 / CIP 104116 / JCM 14847 / LMG 12228 / 1C / PRS 101 / PAO1), this protein is Amidophosphoribosyltransferase.